The following is a 934-amino-acid chain: MAKIIWTIGRFGLLLIPLIVIISRLQVEWYWFDQFELGSVYGKRLLLQLGGALFAFLFVGSCALWRQSWLRPSESEKNERSPVLTGYRYGFCLLACLLVLLSVLAIDTRLAWLAWIEPFSLSYWWSLPFSTGWPLLSLSILMLTLIMFGLTRSRRLGLTQVYGSVCICLIVARSWGLWSLAFSIPNLGRVEPMLGSDVSFGLGRFSAIAFGLELVLLQLSLTLSTALWSRLTRSTCLSDWAFPGLTARQRHGLRPGFALVLMSFSGLMWLSRHQLLWTQDGIVAGAGWLDVHLLLPLRSLGSIALLVLAFVVLPSPFSSVRRRQLRLILAFIAIASFGLEMVLFPLMHWLVVRPRELQLERPYISRAIEATRHAYQLDAIETEPFDPSSRLSREDLRDGASTLRNIRLWDSQPLLATNRQLQQLRVYYRFTNAAVDRYQLRPELLERQQVILAARELDQAALPKRSRTWQNRHFVFTHGFGFTMSPVNSRGADGLPDYFISDIGSSERINGNKALDISRADVKKNVPIGRPALYFGMLPSPYAVAPTQIEEFDHPEGDVNTYNHYSGRAGIPLASFGQRIAASIYIRDPRLLNTGVLKPDSRLLLRRDVKKRVKALAPFLQLKGDPYLVSVPMESGLDQYHDDQHQYWIVDGFTSSNTYPYASTLPDGKEMRYLRNSVKAIVDAYNGTVHLYVSEPDDPMIRGWQKVFPELFQPLESMPTSLRQHLMVPSSMFELQVQQLLRYHVTDPRIFYSGDDVWQVPKELYGKTQIPVAPYHITAQLKRSLDSEFLLLQPLTPLARPNLSGWLAARSDADHYGELVLLRFPSDVPIFGPEQIQALINQNPEISQQFGLWDRAGSQVVQGNLLVVPLGNALLYVEPIYLRARRGGLPTLTRVVVSDGSRVAMANDLNTGLEALLQGSGSKDVVVQELDQSS.

Transmembrane regions (helical) follow at residues 2–22 (AKII…IVII), 45–65 (LLLQ…CALW), 86–106 (GYRY…VLAI), 129–149 (FSTG…IMFG), 165–185 (VCIC…FSIP), 208–228 (IAFG…TALW), 251–271 (HGLR…MWLS), 300–320 (LGSI…FSSV), and 327–347 (LILA…FPLM).

This sequence belongs to the UPF0182 family.

Its subcellular location is the cell membrane. This Synechococcus sp. (strain CC9311) protein is UPF0182 protein sync_1321.